A 656-amino-acid chain; its full sequence is Protein sly1 homolog (656 aa).

Tandem repeats lie at residues D85–A121, R203–Q245, L419–R456, and Q460–T496. A 4 X approximate repeats region spans residues D85–T496.

This sequence belongs to the STXBP/unc-18/SEC1 family.

The protein resides in the cytoplasm. The protein localises to the membrane. Its function is as follows. Non-vital for development. This Drosophila virilis (Fruit fly) protein is Protein sly1 homolog (Slh).